A 30-amino-acid chain; its full sequence is Kappa-sparatoxin-Hv1b (30 aa).

3 disulfide bridges follow: Cys3-Cys17, Cys10-Cys22, and Cys16-Cys26. Residue Trp30 is modified to Tryptophan amide.

It belongs to the neurotoxin 10 (Hwtx-1) family. 19 (HpTX2) subfamily. As to expression, expressed by the venom gland.

The protein localises to the secreted. Functionally, inhibitor of voltage-gated potassium channels of the Kv4/KCND family. Inhibition of Kv4.3/KCND3 and Kv4.2/KCND2 is strongly voltage-dependent, while inhibition of Kv4.1/KCND1 shows less voltage-dependence. Its binding site may be near the potassium channel voltage sensor. Also blocks calcium channels. In Heteropoda venatoria (Brown huntsman spider), this protein is Kappa-sparatoxin-Hv1b.